Reading from the N-terminus, the 400-residue chain is Nicotinate phosphoribosyltransferase (400 aa).

The residue at position 220 (His-220) is a Phosphohistidine; by autocatalysis.

The protein belongs to the NAPRTase family. Transiently phosphorylated on a His residue during the reaction cycle. Phosphorylation strongly increases the affinity for substrates and increases the rate of nicotinate D-ribonucleotide production. Dephosphorylation regenerates the low-affinity form of the enzyme, leading to product release.

The enzyme catalyses nicotinate + 5-phospho-alpha-D-ribose 1-diphosphate + ATP + H2O = nicotinate beta-D-ribonucleotide + ADP + phosphate + diphosphate. It functions in the pathway cofactor biosynthesis; NAD(+) biosynthesis; nicotinate D-ribonucleotide from nicotinate: step 1/1. In terms of biological role, catalyzes the synthesis of beta-nicotinate D-ribonucleotide from nicotinate and 5-phospho-D-ribose 1-phosphate at the expense of ATP. In Shigella boydii serotype 18 (strain CDC 3083-94 / BS512), this protein is Nicotinate phosphoribosyltransferase.